Reading from the N-terminus, the 367-residue chain is Heme A synthase (367 aa).

5 helical membrane passes run 12–32 (GAVR…VAVG), 99–119 (LLGR…WWQG), 127–147 (LGLL…WIMV), 163–183 (LALH…LAAG), and 198–218 (ATAL…GLVA). His-264 serves as a coordination point for heme. 3 helical membrane passes run 266–286 (VTAY…RLTG), 296–316 (GVVI…LLAV), and 317–337 (PLWA…MATV). His-324 contacts heme.

It belongs to the COX15/CtaA family. Type 2 subfamily. As to quaternary structure, interacts with CtaB. It depends on heme b as a cofactor.

It is found in the cell membrane. The catalysed reaction is Fe(II)-heme o + 2 A + H2O = Fe(II)-heme a + 2 AH2. It functions in the pathway porphyrin-containing compound metabolism; heme A biosynthesis; heme A from heme O: step 1/1. Functionally, catalyzes the conversion of heme O to heme A by two successive hydroxylations of the methyl group at C8. The first hydroxylation forms heme I, the second hydroxylation results in an unstable dihydroxymethyl group, which spontaneously dehydrates, resulting in the formyl group of heme A. The sequence is that of Heme A synthase from Methylobacterium radiotolerans (strain ATCC 27329 / DSM 1819 / JCM 2831 / NBRC 15690 / NCIMB 10815 / 0-1).